Reading from the N-terminus, the 450-residue chain is MGRKMRGAAAAAGLWLLALSSLLTLWGGLLPPRTELPASRPPEDRLPPHPIQSGGPAPEPRFPLPPPLVWDARGGSLKTFRALLTLAAGADNPPRRHQDDRGRHEPSGLSWPEERRAVHGGVFWSRGLEEQVPRGFSEAQAAAWLEVARGARVVALDRGGCGRSSNRLARFADGTRACVRYGINPEQIQGEALSYYLARLLGLQRHVPPLALARVEARGAQWVQVQEELRTAHWTEGSVVSLTRWLPNLTDVVVPEPWRSEDGRLRPLRDAGGELTNLSQAELVDLVQWTDLILFDYLTANFDRLVSNLFSLQWDPRVMHRATSNLHRGPGGALVFLDNEAGLVHGYRVAGMWDKYNEPLLQSVCVFRERTARRVLELHRGQDAAARLLRLYSRHEPRFPELAELSEPHAQLLQRRLDFLAKHILHCKAKYGRRPGDLITLRGREGLGYE.

An N-terminal signal peptide occupies residues 1-28 (MGRKMRGAAAAAGLWLLALSSLLTLWGG). Disordered stretches follow at residues 36–61 (LPASRPPEDRLPPHPIQSGGPAPEPR) and 88–111 (AGADNPPRRHQDDRGRHEPSGLSW). The segment covering 93-111 (PPRRHQDDRGRHEPSGLSW) has biased composition (basic and acidic residues). N-linked (GlcNAc...) asparagine glycosylation is found at asparagine 248 and asparagine 277.

This sequence belongs to the FJX1/FJ family. Post-translationally, glycosylated. Undergoes proteolytic cleavage. In terms of tissue distribution, expressed in brain, kidney and lung. In the telencephalon, expressed in the piriform cortex, hippocampus and olfactory bulb. In the diencephalon, expressed in the dorsal thalamus. Expressed in Purkinje cells of the cerebellum and in numerous medullary nuclei.

The protein localises to the secreted. In terms of biological role, acts as an inhibitor of dendrite extension and branching. The chain is Four-jointed box protein 1 (Fjx1) from Mus musculus (Mouse).